Consider the following 261-residue polypeptide: Proliferating cell nuclear antigen (261 aa).

Residues Lys-14, Lys-77, and Lys-80 each carry the N6-acetyllysine modification. A DNA-binding region spans residues 61–80 (RCDRNLAMGVNLTSMSKILK). Cys-135 and Cys-162 are disulfide-bonded. Lys-164 participates in a covalent cross-link: Glycyl lysine isopeptide (Lys-Gly) (interchain with G-Cter in SUMO2); alternate. Lys-164 participates in a covalent cross-link: Glycyl lysine isopeptide (Lys-Gly) (interchain with G-Cter in ubiquitin); alternate. Position 211 is a phosphotyrosine; by EGFR (Tyr-211). Residue Lys-248 is modified to N6-acetyllysine. Residue Lys-254 forms a Glycyl lysine isopeptide (Lys-Gly) (interchain with G-Cter in SUMO2) linkage.

It belongs to the PCNA family. Homotrimer. Interacts with p300/EP300; the interaction occurs on chromatin in UV-irradiated damaged cells. Interacts with CREBBP (via transactivation domain and C-terminus); the interaction occurs on chromatin in UV-irradiated damaged cells. Directly interacts with POLD1, POLD3 and POLD4 subunits of the DNA polymerase delta complex, POLD3 being the major interacting partner; the interaction with POLD3 is inhibited by CDKN1A/p21(CIP1). Forms a complex with activator 1 heteropentamer in the presence of ATP. Interacts with EXO1, POLH, POLK, DNMT1, ERCC5, FEN1, CDC6 and POLDIP2. Interacts with POLB. Interacts with APEX2; this interaction is triggered by reactive oxygen species and increased by misincorporation of uracil in nuclear DNA. Forms a ternary complex with DNTTIP2 and core histone. Interacts with KCTD10 and PPP1R15A. Interacts with SMARCA5/SNF2H. Interacts with BAZ1B/WSTF; the interaction is direct and is required for BAZ1B/WSTF binding to replication foci during S phase. Interacts with HLTF and SHPRH. Interacts with NUDT15; this interaction is disrupted in response to UV irradiation and acetylation. Interacts with CDKN1A/p21(CIP1) and CDT1; interacts via their PIP-box which also recruits the DCX(DTL) complex. The interaction with CDKN1A inhibits POLD3 binding. Interacts with DDX11. Interacts with EGFR; positively regulates PCNA. Interacts with PARPBP. Interacts (when ubiquitinated) with SPRTN; leading to enhance RAD18-mediated PCNA ubiquitination. Interacts (when polyubiquitinated) with ZRANB3. Interacts with SMARCAD1. Interacts with CDKN1C. Interacts with PCLAF (via PIP-box). Interacts with RTEL1 (via PIP-box); the interaction is direct and essential for the suppression of telomere fragility. Interacts with FAM111A (via PIP-box); the interaction is direct and required for PCNA loading on chromatin binding. Interacts with LIG1. Interacts with SETMAR. Interacts with ANKRD17. Interacts with FBXO18/FBH1 (via PIP-box); the interaction recruits the DCX(DTL) complex and promotes ubiquitination and degradation of FBXO18/FBH1. Interacts with POLN. Interacts with SDE2 (via PIP-box); the interaction is direct and prevents ultraviolet light induced monoubiquitination. Component of the replisome complex composed of at least DONSON, MCM2, MCM7, PCNA and TICRR; interaction at least with PCNA occurs during DNA replication. Interacts with MAPK15; the interaction is chromatin binding dependent and prevents MDM2-mediated PCNA destruction by inhibiting the association of PCNA with MDM2. Interacts with PARP10 (via PIP-box). Interacts with DDI2. Interacts with HMCES (via PIP-box). Interacts with TRAIP (via PIP-box). Interacts with UHRF2. Interacts with ALKBH2; this interaction is enhanced during the S-phase of the cell cycle. Interacts with ATAD5; the interaction promotes USP1-mediated PCNA deubiquitination. Interacts (when phosphorylated) with GRB2. Interacts with ANG. Interacts with nuclear UNG; this interaction mediates UNG recruitment to S-phase replication foci. Interacts with ERCC6L2 (via an atypical PIP-box); this interaction facilitates cenrtomeric localization of ERCC6L2. Phosphorylated. Phosphorylation at Tyr-211 by EGFR stabilizes chromatin-associated PCNA. In terms of processing, acetylated by CREBBP and p300/EP300; preferentially acetylated by CREBBP on Lys-80, Lys-13 and Lys-14 and on Lys-77 by p300/EP300 upon loading on chromatin in response to UV irradiation. Lysine acetylation disrupts association with chromatin, hence promoting PCNA ubiquitination and proteasomal degradation in response to UV damage in a CREBBP- and EP300-dependent manner. Acetylation disrupts interaction with NUDT15 and promotes degradation. Post-translationally, ubiquitinated. Following DNA damage, can be either monoubiquitinated to stimulate direct bypass of DNA lesions by specialized DNA polymerases or polyubiquitinated to promote recombination-dependent DNA synthesis across DNA lesions by template switching mechanisms. Following induction of replication stress, monoubiquitinated by the UBE2B-RAD18 complex on Lys-164, leading to recruit translesion (TLS) polymerases, which are able to synthesize across DNA lesions in a potentially error-prone manner. An error-free pathway also exists and requires non-canonical polyubiquitination on Lys-164 through 'Lys-63' linkage of ubiquitin moieties by the E2 complex UBE2N-UBE2V2 and the E3 ligases, HLTF, RNF8 and SHPRH. This error-free pathway, also known as template switching, employs recombination mechanisms to synthesize across the lesion, using as a template the undamaged, newly synthesized strand of the sister chromatid. Monoubiquitination at Lys-164 also takes place in undamaged proliferating cells, and is mediated by the DCX(DTL) complex, leading to enhance PCNA-dependent translesion DNA synthesis. Sumoylated during S phase. Methylated on glutamate residues by ARMT1.

It localises to the nucleus. Functionally, auxiliary protein of DNA polymerase delta and epsilon, is involved in the control of eukaryotic DNA replication by increasing the polymerase's processibility during elongation of the leading strand. Induces a robust stimulatory effect on the 3'-5' exonuclease and 3'-phosphodiesterase, but not apurinic-apyrimidinic (AP) endonuclease, APEX2 activities. Has to be loaded onto DNA in order to be able to stimulate APEX2. Plays a key role in DNA damage response (DDR) by being conveniently positioned at the replication fork to coordinate DNA replication with DNA repair and DNA damage tolerance pathways. Acts as a loading platform to recruit DDR proteins that allow completion of DNA replication after DNA damage and promote postreplication repair: Monoubiquitinated PCNA leads to recruitment of translesion (TLS) polymerases, while 'Lys-63'-linked polyubiquitination of PCNA is involved in error-free pathway and employs recombination mechanisms to synthesize across the lesion. This Cricetulus griseus (Chinese hamster) protein is Proliferating cell nuclear antigen (PCNA).